The sequence spans 192 residues: Casparian strip membrane protein 4 (192 aa).

The Cytoplasmic portion of the chain corresponds to 1–29 (MTKDVVIEHGESSKAPLVPAPVAAGVGRA). The helical transmembrane segment at 30–50 (VSIADVFLRFLSIVATIASAI) threads the bilayer. Residues 51 to 79 (SMGTTNETLPFFTQFIQFEAKYSDLPSFT) lie on the Extracellular side of the membrane. N-linked (GlcNAc...) asparagine glycosylation occurs at asparagine 56. The chain crosses the membrane as a helical span at residues 80-100 (FFVAANAVVCTYLVLSIPLSI). Residues 101–112 (VHIIRPRARYSR) lie on the Cytoplasmic side of the membrane. Residues 113–133 (LILVFFDAVMLALLTAGASAA) form a helical membrane-spanning segment. The Extracellular portion of the chain corresponds to 134–166 (AAIVYLAHKGNVRANWFAICQQFDSFCERISGS). A helical transmembrane segment spans residues 167-187 (LIGSFAAMVLLIVLIFLSAFA). Residues 188–192 (LARRH) lie on the Cytoplasmic side of the membrane.

It belongs to the Casparian strip membrane proteins (CASP) family. Homodimer and heterodimers.

It localises to the cell membrane. Functionally, regulates membrane-cell wall junctions and localized cell wall deposition. Required for establishment of the Casparian strip membrane domain (CSD) and the subsequent formation of Casparian strips, a cell wall modification of the root endodermis that determines an apoplastic barrier between the intraorganismal apoplasm and the extraorganismal apoplasm and prevents lateral diffusion. This is Casparian strip membrane protein 4 from Sorghum bicolor (Sorghum).